A 263-amino-acid polypeptide reads, in one-letter code: Small ribosomal subunit protein eS4 (263 aa).

The S4 RNA-binding domain occupies 42 to 104 (LPLIIFLRNR…TGEHFRLVYD (63 aa)).

This sequence belongs to the eukaryotic ribosomal protein eS4 family.

This is Small ribosomal subunit protein eS4 (RPS4) from Gallus gallus (Chicken).